Consider the following 213-residue polypeptide: Glycerol-3-phosphate acyltransferase (213 aa).

6 helical membrane passes run 3–23 (IIIL…GLWI), 48–68 (ILGV…GTLA), 71–91 (LPLI…LAVI), 119–139 (PFFL…FSMI), 144–164 (VVAA…GFIL), and 165–185 (TSYD…IIFR).

It belongs to the PlsY family. In terms of assembly, probably interacts with PlsX.

It is found in the cell membrane. It catalyses the reaction an acyl phosphate + sn-glycerol 3-phosphate = a 1-acyl-sn-glycero-3-phosphate + phosphate. The protein operates within lipid metabolism; phospholipid metabolism. Catalyzes the transfer of an acyl group from acyl-phosphate (acyl-PO(4)) to glycerol-3-phosphate (G3P) to form lysophosphatidic acid (LPA). This enzyme utilizes acyl-phosphate as fatty acyl donor, but not acyl-CoA or acyl-ACP. In Lactococcus lactis subsp. cremoris (strain MG1363), this protein is Glycerol-3-phosphate acyltransferase.